The primary structure comprises 226 residues: E3 ubiquitin-protein ligase RNF186 (226 aa).

The RING-type zinc finger occupies 39–85 (CLVCREPYNCARSPKLLSCQHTFCAVCLKLLLYVQEDTWSIPCPLCR). The next 2 helical transmembrane spans lie at 157–177 (HLLL…PGVI) and 179–199 (WVLA…CCHP).

As to quaternary structure, interacts with BNIP1. Post-translationally, polyubiquitinated. 'Lys-29'-linked autoubiquitination leads to proteasomal degradation.

The protein resides in the endoplasmic reticulum membrane. It catalyses the reaction S-ubiquitinyl-[E2 ubiquitin-conjugating enzyme]-L-cysteine + [acceptor protein]-L-lysine = [E2 ubiquitin-conjugating enzyme]-L-cysteine + N(6)-ubiquitinyl-[acceptor protein]-L-lysine.. It functions in the pathway protein modification; protein ubiquitination. Functionally, E3 ubiquitin protein ligase that is part of an apoptotic signaling pathway activated by endoplasmic reticulum stress. Stimulates the expression of proteins specific of the unfolded protein response (UPR), ubiquitinates BNIP1 and regulates its localization to the mitochondrion and induces calcium release from the endoplasmic reticulum that ultimately leads to cell apoptosis. Plays a role in the maintenance of intestinal homeostasis and clearance of enteric pathogens. Upon NOD2 stimulation, ubiquitinates the ER stress sensor activating transcription factor 6/ATF6 and promotes the unfolded protein response UPR. Participates in basal level of autophagy maintenance by regulating the ubiquitination of EPHB2. Upon stimulation by ligand EFNB1, ubiquitinates EPHB2 and further recruits MAP1LC3B for autophagy induction. Controls nutrient sensing by ubiquitinating Sestrin-2/SESN2, which is an intracellular sensor of cytosolic leucine and inhibitor of mTORC1 activity. The protein is E3 ubiquitin-protein ligase RNF186 of Mus musculus (Mouse).